A 105-amino-acid polypeptide reads, in one-letter code: Phosphoribosyl-AMP cyclohydrolase (105 aa).

Asp-72 contributes to the Mg(2+) binding site. Residue Cys-73 coordinates Zn(2+). The Mg(2+) site is built by Asp-74 and Asp-76. Residues Cys-89 and Cys-96 each coordinate Zn(2+).

Belongs to the PRA-CH family. Homodimer. Mg(2+) is required as a cofactor. The cofactor is Zn(2+).

It localises to the cytoplasm. It carries out the reaction 1-(5-phospho-beta-D-ribosyl)-5'-AMP + H2O = 1-(5-phospho-beta-D-ribosyl)-5-[(5-phospho-beta-D-ribosylamino)methylideneamino]imidazole-4-carboxamide. It participates in amino-acid biosynthesis; L-histidine biosynthesis; L-histidine from 5-phospho-alpha-D-ribose 1-diphosphate: step 3/9. Its function is as follows. Catalyzes the hydrolysis of the adenine ring of phosphoribosyl-AMP. The sequence is that of Phosphoribosyl-AMP cyclohydrolase from Listeria monocytogenes serovar 1/2a (strain ATCC BAA-679 / EGD-e).